The primary structure comprises 700 residues: Pentatricopeptide repeat-containing protein At3g26540 (700 aa).

PPR repeat units follow at residues 95-125 (PIFLLNRAIEAYGKCGCVDDARELFEEMPER), 126-160 (DGGSWNAVITACAQNGVSDEVFRMFRRMNRDGVRA), 161-195 (TETSFAGVLKSCGLILDLRLLRQLHCAVVKYGYSG), 196-226 (NVDLETSIVDVYGKCRVMSDARRVFDEIVNP), 227-261 (SDVSWNVIVRRYLEMGFNDEAVVMFFKMLELNVRP), 262-296 (LNHTVSSVMLACSRSLALEVGKVIHAIAVKLSVVA), 297-327 (DTVVSTSVFDMYVKCDRLESARRVFDQTRSK), 328-362 (DLKSWTSAMSGYAMSGLTREARELFDLMPERNIVS), 363-389 (WNAMLGGYVHAHEWDEALDFLTLMRQE), 394-428 (DNVTLVWILNVCSGISDVQMGKQAHGFIYRHGYDT), 429-459 (NVIVANALLDMYGKCGTLQSANIWFRQMSEL), 461-495 (DEVSWNALLTGVARVGRSEQALSFFEGMQVEAKPS), 497-529 (YTLATLLAGCANIPALNLGKAIHGFLIRDGYKI), 530-560 (DVVIRGAMVDMYSKCRCFDYAIEVFKEAATR), 561-595 (DLILWNSIIRGCCRNGRSKEVFELFMLLENEGVKP), 596-626 (DHVTFLGILQACIREGHVELGFQYFSSMSTK), and 632-662 (QVEHYDCMIELYCKYGCLHQLEEFLLLMPFD).

It belongs to the PPR family. PCMP-A subfamily.

The sequence is that of Pentatricopeptide repeat-containing protein At3g26540 (PCMP-A5) from Arabidopsis thaliana (Mouse-ear cress).